The following is a 459-amino-acid chain: tRNA modification GTPase MnmE (459 aa).

Residues R23, E86, and R125 each coordinate (6S)-5-formyl-5,6,7,8-tetrahydrofolate. Positions 221-380 (GLKTVIVGKP…LQDKIESMVY (160 aa)) constitute a TrmE-type G domain. A K(+)-binding site is contributed by N231. Residues 231-236 (NVGKSS), 250-256 (TDIPGTT), and 275-278 (DTAG) each bind GTP. Mg(2+) is bound at residue S235. Residues T250, I252, and T255 each contribute to the K(+) site. Position 256 (T256) interacts with Mg(2+). K459 lines the (6S)-5-formyl-5,6,7,8-tetrahydrofolate pocket.

The protein belongs to the TRAFAC class TrmE-Era-EngA-EngB-Septin-like GTPase superfamily. TrmE GTPase family. Homodimer. Heterotetramer of two MnmE and two MnmG subunits. Requires K(+) as cofactor.

The protein resides in the cytoplasm. Exhibits a very high intrinsic GTPase hydrolysis rate. Involved in the addition of a carboxymethylaminomethyl (cmnm) group at the wobble position (U34) of certain tRNAs, forming tRNA-cmnm(5)s(2)U34. The chain is tRNA modification GTPase MnmE from Clostridioides difficile (strain 630) (Peptoclostridium difficile).